Here is a 397-residue protein sequence, read N- to C-terminus: G2/mitotic-specific cyclin-B1 (397 aa).

It belongs to the cyclin family. Cyclin AB subfamily. In terms of assembly, interacts with the cdc2 protein kinase to form a serine/threonine kinase holoenzyme complex also known as maturation promoting factor (MPF). The cyclin subunit imparts substrate specificity to the complex. When not in a complex with cdc2, interacts with spdya. Interacts with nap1l1. Interacts with nanos1.

It is found in the cytoplasm. Its subcellular location is the cytoskeleton. The protein localises to the microtubule organizing center. It localises to the centrosome. The protein resides in the nucleus. In terms of biological role, essential for the control of the cell cycle at the G2/M (mitosis) transition. This is G2/mitotic-specific cyclin-B1 (ccnb1) from Xenopus laevis (African clawed frog).